Consider the following 206-residue polypeptide: Isopentenyl-diphosphate Delta-isomerase (206 aa).

Mn(2+) is bound by residues His44 and His51. In terms of domain architecture, Nudix hydrolase spans 49–183 (ALHLAFSCHV…PWAFSPWLVL (135 aa)). Cys86 is an active-site residue. Cys86 serves as a coordination point for Mg(2+). His88 contacts Mn(2+). Residue Glu106 coordinates Mg(2+). Positions 133 and 135 each coordinate Mn(2+). Glu135 is a catalytic residue.

Belongs to the IPP isomerase type 1 family. The cofactor is Mg(2+). It depends on Mn(2+) as a cofactor.

The protein resides in the cytoplasm. The catalysed reaction is isopentenyl diphosphate = dimethylallyl diphosphate. It functions in the pathway isoprenoid biosynthesis; dimethylallyl diphosphate biosynthesis; dimethylallyl diphosphate from isopentenyl diphosphate: step 1/1. Functionally, catalyzes the 1,3-allylic rearrangement of the homoallylic substrate isopentenyl (IPP) to its highly electrophilic allylic isomer, dimethylallyl diphosphate (DMAPP). The polypeptide is Isopentenyl-diphosphate Delta-isomerase (Agromyces mediolanus (Corynebacterium mediolanum)).